The sequence spans 357 residues: Glucose-6-phosphatase catalytic subunit 1 (357 aa).

Topologically, residues 1–28 (MEEGMNILHDFGIQSTRYLQVNYQDSQD) are lumenal. A helical transmembrane segment spans residues 29 to 49 (WFILVSVIADLRNAFYVLFPI). Topologically, residues 50–60 (WFHLKETVGIN) are cytoplasmic. The chain crosses the membrane as a helical span at residues 61 to 81 (LLWVAVVGDWFNLVFKWILFG). Topologically, residues 82–117 (QRPYWWVLDTDYYSNSSVPIIKQFPVTCETGPGSPS) are lumenal. Residue Arg83 participates in substrate binding. An N-linked (GlcNAc...) asparagine glycan is attached at Asn96. A helical transmembrane segment spans residues 118–138 (GHAMGAAGVYYVMVTSTLAIF). His119 serves as the catalytic Proton donor. Residues 139 to 147 (RGKKKPTYG) lie on the Cytoplasmic side of the membrane. Residues 148–168 (FRCLNVILWLGFWAVQLNVCL) form a helical membrane-spanning segment. Residues 169–179 (SRIYLAAHFPH) lie on the Lumenal side of the membrane. Arg170 is a binding site for substrate. His176 functions as the Nucleophile in the catalytic mechanism. The chain crosses the membrane as a helical span at residues 180–202 (QVVAGVLSGIAVAETFSHIRGIY). At 203–211 (NASLRKYCL) the chain is on the cytoplasmic side. Residues 212–232 (ITIFLFGFALGFYLLLKGLGV) form a helical membrane-spanning segment. The Lumenal portion of the chain corresponds to 233–254 (DLLWTLEKAKRWCERPEWVHLD). Residues 255–275 (TTPFASLFKNLGTLLGLGLAL) traverse the membrane as a helical segment. Residues 276–291 (NSSMYRKSCKGELSKL) are Cytoplasmic-facing. A helical transmembrane segment spans residues 292–312 (LPFRFACIVASLVLLHLFDSL). Residues 313–320 (KPPSQVEL) lie on the Lumenal side of the membrane. The helical transmembrane segment at 321–341 (IFYILSFCKSATVPFASVSLI) threads the bilayer. Topologically, residues 342–357 (PYCLARILGQTHKKSL) are cytoplasmic. Residues 354–357 (KKSL) carry the Prevents secretion from ER motif.

It belongs to the glucose-6-phosphatase family. As to expression, liver and kidney.

The protein resides in the endoplasmic reticulum membrane. The catalysed reaction is D-glucose 6-phosphate + H2O = D-glucose + phosphate. Its pathway is carbohydrate biosynthesis; gluconeogenesis. Hydrolyzes glucose-6-phosphate to glucose in the endoplasmic reticulum. Forms with the glucose-6-phosphate transporter (SLC37A4/G6PT) the complex responsible for glucose production in the terminal step of glycogenolysis and gluconeogenesis. Hence, it is the key enzyme in homeostatic regulation of blood glucose levels. This is Glucose-6-phosphatase catalytic subunit 1 (G6pc1) from Mus musculus (Mouse).